A 43-amino-acid chain; its full sequence is TTTVQYDPSEQYQPYPEQQEPFVQQQPPFVQQQQPFVQQQEPF.

The tract at residues 1 to 23 (TTTVQYDPSEQYQPYPEQQEPFV) is disordered. The segment covering 10 to 23 (EQYQPYPEQQEPFV) has biased composition (low complexity). Repeat 1 spans residues 21–26 (PFVQQQ). The segment at 21–40 (PFVQQQPPFVQQQQPFVQQQ) is 3 X 6 aa tandem repeats of P-F-V-Q-Q-Q. One copy of the 2; approximate repeat lies at 27–34 (PPFVQQQQ). Residues 35-40 (PFVQQQ) form repeat 3.

This sequence belongs to the gliadin/glutenin family. Monomer.

The protein localises to the vacuole. Its subcellular location is the aleurone grain. In terms of biological role, seed storage protein. Serves as a source of nitrogen, carbon, and sulfur for the young developing seedling. The polypeptide is Avenin-F (Avena sativa (Oat)).